We begin with the raw amino-acid sequence, 154 residues long: 8-oxo-dGTP diphosphatase (154 aa).

The Nudix hydrolase domain maps to 1–129 (MPQLATICYI…DHTFVEWLLE (129 aa)). Residues Gly-38, Glu-53, Glu-56, and Glu-57 each coordinate Mg(2+). The Nudix box signature appears at 38–59 (GKLERGETPQECAVREILEETG).

The protein belongs to the Nudix hydrolase family. In terms of assembly, homotrimer. Mg(2+) serves as cofactor.

The enzyme catalyses 8-oxo-dGTP + H2O = 8-oxo-dGMP + diphosphate + H(+). In terms of biological role, involved in the DNA repair system to avoid A.T to G.C transversions. Degrades 8-oxo-dGTP to the monophosphate, but is also active on all of the nucleoside triphosphates. This chain is 8-oxo-dGTP diphosphatase (mutX), found in Streptococcus pneumoniae (strain ATCC BAA-255 / R6).